The following is a 345-amino-acid chain: Probable fructokinase-3 (345 aa).

This sequence belongs to the carbohydrate kinase PfkB family.

The catalysed reaction is D-fructose + ATP = D-fructose 6-phosphate + ADP + H(+). Its pathway is glycan biosynthesis; starch biosynthesis. In terms of biological role, may play an important role in maintaining the flux of carbon towards starch formation. The protein is Probable fructokinase-3 of Arabidopsis thaliana (Mouse-ear cress).